The primary structure comprises 127 residues: Major sperm protein 152 (127 aa).

Threonine 2 is modified (N-acetylthreonine). Positions 9 to 126 constitute an MSP domain; that stretch reads DIQTQPGTKI…RRKNLPIEYN (118 aa).

In terms of tissue distribution, sperm.

The protein localises to the cell projection. It is found in the pseudopodium. The protein resides in the cytoplasm. It localises to the cytoskeleton. Its function is as follows. Central component in molecular interactions underlying sperm crawling. Forms an extensive filament system that extends from sperm villipoda, along the leading edge of the pseudopod. This chain is Major sperm protein 152 (msp-152), found in Caenorhabditis elegans.